Here is a 20-residue protein sequence, read N- to C-terminus: Ferric reductase A (20 aa).

In terms of assembly, monomer.

It carries out the reaction 2 a Fe(II)-siderophore + NAD(+) + H(+) = 2 a Fe(III)-siderophore + NADH. In terms of biological role, reductase activity that acts on Fe(3+)-chelates and NADH as an electron donor and requires the presence of FMN for full activity. May play a role in iron uptake. The sequence is that of Ferric reductase A (ferA) from Paracoccus denitrificans.